A 399-amino-acid chain; its full sequence is Succinate--CoA ligase [ADP-forming] subunit beta (399 aa).

An ATP-grasp domain is found at 9 to 254; it reads KAVLQPFGVS…ETEEDAKEIE (246 aa). Residues Lys46, 53–55, Glu109, Ser112, and Glu117 contribute to the ATP site; that span reads GRG. The Mg(2+) site is built by Asn209 and Asp223. Substrate-binding positions include Asn274 and 331–333; that span reads GIM.

It belongs to the succinate/malate CoA ligase beta subunit family. Heterotetramer of two alpha and two beta subunits. Requires Mg(2+) as cofactor.

The catalysed reaction is succinate + ATP + CoA = succinyl-CoA + ADP + phosphate. The enzyme catalyses GTP + succinate + CoA = succinyl-CoA + GDP + phosphate. It participates in carbohydrate metabolism; tricarboxylic acid cycle; succinate from succinyl-CoA (ligase route): step 1/1. Its function is as follows. Succinyl-CoA synthetase functions in the citric acid cycle (TCA), coupling the hydrolysis of succinyl-CoA to the synthesis of either ATP or GTP and thus represents the only step of substrate-level phosphorylation in the TCA. The beta subunit provides nucleotide specificity of the enzyme and binds the substrate succinate, while the binding sites for coenzyme A and phosphate are found in the alpha subunit. The protein is Succinate--CoA ligase [ADP-forming] subunit beta of Rhodopseudomonas palustris (strain BisB18).